A 379-amino-acid polypeptide reads, in one-letter code: uncharacterized protein (379 aa).

Belongs to the glycosyltransferase 28 family.

This is an uncharacterized protein from Methanosarcina acetivorans (strain ATCC 35395 / DSM 2834 / JCM 12185 / C2A).